The primary structure comprises 255 residues: MAVGKNKRLSKGKKGLKKRVVDPFTRKEWYDIKAPSTFENRNVGKTLVNKSVGLKNASDSLKGRVVEVCLADLQGSEDHSFRKVKLRVDEVQGKNLLTNFHGMDFTTDKLRSMVRKWQTLIEANVTVKTSDDYVLRIFAIAFTRKQANQVKRTSYAQSSHIRQIRKVISEILTREVQNSTLAQLTSKLIPEVINKEIENATKDIFPLQNVHIRKVKLLKQPKFDLGSLLSLHGEASAEEKGKKVAGFKDEILETV.

Ala2 bears the N-acetylalanine; partial mark.

Belongs to the eukaryotic ribosomal protein eS1 family. As to quaternary structure, component of the small ribosomal subunit. Mature ribosomes consist of a small (40S) and a large (60S) subunit. The 40S subunit contains about 33 different proteins and 1 molecule of RNA (18S). The 60S subunit contains about 49 different proteins and 3 molecules of RNA (25S, 5.8S and 5S).

The protein resides in the cytoplasm. The chain is Small ribosomal subunit protein eS1 from Kluyveromyces lactis (strain ATCC 8585 / CBS 2359 / DSM 70799 / NBRC 1267 / NRRL Y-1140 / WM37) (Yeast).